The sequence spans 661 residues: NUAK family SNF1-like kinase 1 (661 aa).

Residue Met1 is modified to N-acetylmethionine. Positions 1–24 are disordered; sequence MEGAAAPVAGDRPDLGLGAPGSPR. Residue Ser22 is modified to Phosphoserine. In terms of domain architecture, Protein kinase spans 55–306; sequence YELQETLGKG…IEDIANHWWV (252 aa). Residues 61 to 69 and Lys84 each bind ATP; that span reads LGKGTYGKV. The Proton acceptor role is filled by Asp178. The residue at position 211 (Thr211) is a Phosphothreonine; by LKB1. Disordered regions lie at residues 345–421 and 442–570; these read TEAK…EGVV and LPSS…RPSS. Positions 393–404 are enriched in basic residues; it reads SSKRPKGILKKR. A GILK motif motif is present at residues 399–402; the sequence is GILK. Ser455 bears the Phosphoserine mark. Basic residues predominate over residues 518–529; it reads SCRRKGILKHSS. Ser600 carries the post-translational modification Phosphoserine; by PKB/AKT1.

This sequence belongs to the protein kinase superfamily. CAMK Ser/Thr protein kinase family. SNF1 subfamily. Interacts (via GILK motif) with PPP1CB; the interaction is direct and bridges NUAK1 and PPP1R12A. Interacts with CDKN1A. Mg(2+) is required as a cofactor. Ubiquitinated with 'Lys-29'- and 'Lys-33'-linked polyubiquitins which appear to impede LKB1-mediated phosphorylation. Deubiquitinated by USP9X. In terms of processing, phosphorylated at Thr-211 by STK11/LKB1 in complex with STE20-related adapter-alpha (STRADA) pseudo kinase and CAB39. Not dephosphorylated by the myosin PP1 complex when regulating its activity, due to the presence of PPP1R12A, which prevents myosin PP1 from dephosphorylating NUAK1. Phosphorylated by STK38L upon stimulation with IGF1. In terms of tissue distribution, expressed at high levels in heart and brain, and at lower levels in skeletal muscle, kidney, ovary, placenta, lung and liver. Highly up-regulated in colorectal cancer cell lines.

It is found in the nucleus. The protein resides in the cytoplasm. It catalyses the reaction L-seryl-[protein] + ATP = O-phospho-L-seryl-[protein] + ADP + H(+). The enzyme catalyses L-threonyl-[protein] + ATP = O-phospho-L-threonyl-[protein] + ADP + H(+). Its activity is regulated as follows. Activated by phosphorylation on Thr-211. Activated by phosphorylation at Ser-600 AKT1 during glucose starvation; the relevance of such activation in normal cells is however unsure. In terms of biological role, serine/threonine-protein kinase involved in various processes such as cell adhesion, regulation of cell ploidy and senescence, cell proliferation and tumor progression. Phosphorylates ATM, CASP6, LATS1, PPP1R12A and p53/TP53. Acts as a regulator of cellular senescence and cellular ploidy by mediating phosphorylation of 'Ser-464' of LATS1, thereby controlling its stability. Controls cell adhesion by regulating activity of the myosin protein phosphatase 1 (PP1) complex. Acts by mediating phosphorylation of PPP1R12A subunit of myosin PP1: phosphorylated PPP1R12A then interacts with 14-3-3, leading to reduced dephosphorylation of myosin MLC2 by myosin PP1. May be involved in DNA damage response: phosphorylates p53/TP53 at 'Ser-15' and 'Ser-392' and is recruited to the CDKN1A/WAF1 promoter to participate in transcription activation by p53/TP53. May also act as a tumor malignancy-associated factor by promoting tumor invasion and metastasis under regulation and phosphorylation by AKT1. Suppresses Fas-induced apoptosis by mediating phosphorylation of CASP6, thereby suppressing the activation of the caspase and the subsequent cleavage of CFLAR. Regulates UV radiation-induced DNA damage response mediated by CDKN1A. In association with STK11, phosphorylates CDKN1A in response to UV radiation and contributes to its degradation which is necessary for optimal DNA repair. The polypeptide is NUAK family SNF1-like kinase 1 (NUAK1) (Homo sapiens (Human)).